We begin with the raw amino-acid sequence, 326 residues long: Beta-ketoacyl-[acyl-carrier-protein] synthase III (326 aa).

Residues cysteine 111 and histidine 252 contribute to the active site. The tract at residues 253 to 257 is ACP-binding; the sequence is QANIR. Asparagine 282 is a catalytic residue.

Belongs to the thiolase-like superfamily. FabH family. Homodimer.

Its subcellular location is the plastid. The protein resides in the chloroplast. It catalyses the reaction malonyl-[ACP] + acetyl-CoA + H(+) = 3-oxobutanoyl-[ACP] + CO2 + CoA. The protein operates within lipid metabolism; fatty acid biosynthesis. Functionally, catalyzes the condensation reaction of fatty acid synthesis by the addition to an acyl acceptor of two carbons from malonyl-ACP. Catalyzes the first condensation reaction which initiates fatty acid synthesis and may therefore play a role in governing the total rate of fatty acid production. Possesses both acetoacetyl-ACP synthase and acetyl transacylase activities. Its substrate specificity determines the biosynthesis of branched-chain and/or straight-chain of fatty acids. The sequence is that of Beta-ketoacyl-[acyl-carrier-protein] synthase III from Porphyra umbilicalis (Purple laver).